A 177-amino-acid chain; its full sequence is Disulfide bond formation protein B (177 aa).

Residues 1–14 (MLIFFKNLSMKRST) are Cytoplasmic-facing. The helical transmembrane segment at 15-31 (WILLFISALVLESTALY) threads the bilayer. The Periplasmic portion of the chain corresponds to 32 to 49 (FQHGMGLNPCVMCIYERV). Cys41 and Cys44 are disulfide-bonded. Residues 50 to 65 (AILGILFSGLIGCIAP) traverse the membrane as a helical segment. The Cytoplasmic portion of the chain corresponds to 66-72 (KWLVLRI). The chain crosses the membrane as a helical span at residues 73-90 (LALLIGLGSAVKGLLLAI). Residues 91–145 (KHLDYQINVYPWNQCAMVPDFPQTLPLDKWFPNIFMPSGSCSDITWSFLGFSMVQ) are Periplasmic-facing. Cysteines 105 and 131 form a disulfide. The helical transmembrane segment at 146-164 (WIIVIFACYFLFFIILSIS) threads the bilayer. At 165–177 (QFKKVRKNRMLFR) the chain is on the cytoplasmic side.

The protein belongs to the DsbB family.

It is found in the cell inner membrane. In terms of biological role, required for disulfide bond formation in some periplasmic proteins. Acts by oxidizing the DsbA protein. The polypeptide is Disulfide bond formation protein B (Histophilus somni (strain 129Pt) (Haemophilus somnus)).